Reading from the N-terminus, the 417-residue chain is Serine hydroxymethyltransferase (417 aa).

At Lys54 the chain carries N6-acetyllysine. Residues Leu121 and 125–127 (GHL) contribute to the (6S)-5,6,7,8-tetrahydrofolate site. Lys229 is modified (N6-(pyridoxal phosphate)lysine). 3 positions are modified to N6-acetyllysine: Lys250, Lys285, and Lys354. Residue 355–357 (SPF) coordinates (6S)-5,6,7,8-tetrahydrofolate. Lys375 is modified (N6-acetyllysine).

Belongs to the SHMT family. As to quaternary structure, homodimer. Pyridoxal 5'-phosphate serves as cofactor.

Its subcellular location is the cytoplasm. The enzyme catalyses (6R)-5,10-methylene-5,6,7,8-tetrahydrofolate + glycine + H2O = (6S)-5,6,7,8-tetrahydrofolate + L-serine. The protein operates within one-carbon metabolism; tetrahydrofolate interconversion. It functions in the pathway amino-acid biosynthesis; glycine biosynthesis; glycine from L-serine: step 1/1. Functionally, catalyzes the reversible interconversion of serine and glycine with tetrahydrofolate (THF) serving as the one-carbon carrier. This reaction serves as the major source of one-carbon groups required for the biosynthesis of purines, thymidylate, methionine, and other important biomolecules. Also exhibits THF-independent aldolase activity toward beta-hydroxyamino acids, producing glycine and aldehydes, via a retro-aldol mechanism. The chain is Serine hydroxymethyltransferase from Escherichia coli O17:K52:H18 (strain UMN026 / ExPEC).